We begin with the raw amino-acid sequence, 204 residues long: Methylthioribulose-1-phosphate dehydratase (204 aa).

Zn(2+) contacts are provided by His-96 and His-98.

This sequence belongs to the aldolase class II family. MtnB subfamily. Zn(2+) serves as cofactor.

The catalysed reaction is 5-(methylsulfanyl)-D-ribulose 1-phosphate = 5-methylsulfanyl-2,3-dioxopentyl phosphate + H2O. It participates in amino-acid biosynthesis; L-methionine biosynthesis via salvage pathway; L-methionine from S-methyl-5-thio-alpha-D-ribose 1-phosphate: step 2/6. Catalyzes the dehydration of methylthioribulose-1-phosphate (MTRu-1-P) into 2,3-diketo-5-methylthiopentyl-1-phosphate (DK-MTP-1-P). The polypeptide is Methylthioribulose-1-phosphate dehydratase (Methylococcus capsulatus (strain ATCC 33009 / NCIMB 11132 / Bath)).